The primary structure comprises 268 residues: MIQKLLARDFFNNKEQPIILEPRAPQEIFPEHTHDFDELVIVKHGSGRHILNGYPHDLYPGVVLYIQAQDHHSYENLQDLCLTNILIQSNNNFKYLNNIDILLNGLKPENSSYQLINKKTAEYIDSLLEKINAIDESYNLQNECLFFQVLSSIQAHQFNDSGYGNTEEKGRQMIRWLENNFEKEIDWEELAEKFALPIRTLHRYIKSQTGHTPQNYVTKLRLAQAYYQLKYTEKNIINIAYDCGFNDSSYFSTCFKNEYSIAPRELRI.

Residues 171 to 268 (RQMIRWLENN…YSIAPRELRI (98 aa)) enclose the HTH araC/xylS-type domain. DNA-binding regions (H-T-H motif) lie at residues 188–209 (EELA…KSQT) and 236–259 (IINI…KNEY).

As to quaternary structure, binds DNA as a dimer.

It is found in the cytoplasm. In terms of biological role, activates expression of the rhaBAD and rhaT operons. This chain is HTH-type transcriptional activator RhaS, found in Mannheimia succiniciproducens (strain KCTC 0769BP / MBEL55E).